Here is a 477-residue protein sequence, read N- to C-terminus: Methylenetetrahydrofolate--tRNA-(uracil-5-)-methyltransferase TrmFO (477 aa).

Residue 14–19 (GGGLAG) coordinates FAD.

Belongs to the MnmG family. TrmFO subfamily. The cofactor is FAD.

The protein localises to the cytoplasm. It catalyses the reaction uridine(54) in tRNA + (6R)-5,10-methylene-5,6,7,8-tetrahydrofolate + NADH + H(+) = 5-methyluridine(54) in tRNA + (6S)-5,6,7,8-tetrahydrofolate + NAD(+). The enzyme catalyses uridine(54) in tRNA + (6R)-5,10-methylene-5,6,7,8-tetrahydrofolate + NADPH + H(+) = 5-methyluridine(54) in tRNA + (6S)-5,6,7,8-tetrahydrofolate + NADP(+). Functionally, catalyzes the folate-dependent formation of 5-methyl-uridine at position 54 (M-5-U54) in all tRNAs. The polypeptide is Methylenetetrahydrofolate--tRNA-(uracil-5-)-methyltransferase TrmFO (Rhizobium johnstonii (strain DSM 114642 / LMG 32736 / 3841) (Rhizobium leguminosarum bv. viciae)).